We begin with the raw amino-acid sequence, 156 residues long: MSRRHAAEKREVLPDAKFGDRVLTKFMNNLMIDGKKSAAEKIVYNAFDRVESKLKRSPLEVFHECLDNIKPSVEVRSRRVGGATYQVPVEVRPERREALAIRWLINASRARNENTMEERLAGELVDAVNSRGSAVKKREDTHKMAEANKAFSHYRW.

This sequence belongs to the universal ribosomal protein uS7 family. Part of the 30S ribosomal subunit. Contacts proteins S9 and S11.

One of the primary rRNA binding proteins, it binds directly to 16S rRNA where it nucleates assembly of the head domain of the 30S subunit. Is located at the subunit interface close to the decoding center, probably blocks exit of the E-site tRNA. In Dinoroseobacter shibae (strain DSM 16493 / NCIMB 14021 / DFL 12), this protein is Small ribosomal subunit protein uS7.